Here is a 358-residue protein sequence, read N- to C-terminus: Chorismate synthase (358 aa).

Residues arginine 46 and arginine 52 each contribute to the NADP(+) site. FMN contacts are provided by residues 123 to 125 (RSS), 239 to 240 (NA), glycine 283, 298 to 302 (KSVAT), and arginine 324.

The protein belongs to the chorismate synthase family. In terms of assembly, homotetramer. FMNH2 serves as cofactor.

It carries out the reaction 5-O-(1-carboxyvinyl)-3-phosphoshikimate = chorismate + phosphate. Its pathway is metabolic intermediate biosynthesis; chorismate biosynthesis; chorismate from D-erythrose 4-phosphate and phosphoenolpyruvate: step 7/7. In terms of biological role, catalyzes the anti-1,4-elimination of the C-3 phosphate and the C-6 proR hydrogen from 5-enolpyruvylshikimate-3-phosphate (EPSP) to yield chorismate, which is the branch point compound that serves as the starting substrate for the three terminal pathways of aromatic amino acid biosynthesis. This reaction introduces a second double bond into the aromatic ring system. This chain is Chorismate synthase, found in Parabacteroides distasonis (strain ATCC 8503 / DSM 20701 / CIP 104284 / JCM 5825 / NCTC 11152).